The following is a 268-amino-acid chain: 4-hydroxy-tetrahydrodipicolinate reductase (268 aa).

Residues glycine 8 to methionine 13, aspartate 34, glycine 95 to threonine 97, and alanine 121 to phenylalanine 124 contribute to the NAD(+) site. Residue histidine 151 is the Proton donor/acceptor of the active site. Histidine 152 is a binding site for (S)-2,3,4,5-tetrahydrodipicolinate. Residue lysine 155 is the Proton donor of the active site. A (S)-2,3,4,5-tetrahydrodipicolinate-binding site is contributed by glycine 161–threonine 162.

This sequence belongs to the DapB family.

It localises to the cytoplasm. It carries out the reaction (S)-2,3,4,5-tetrahydrodipicolinate + NAD(+) + H2O = (2S,4S)-4-hydroxy-2,3,4,5-tetrahydrodipicolinate + NADH + H(+). The catalysed reaction is (S)-2,3,4,5-tetrahydrodipicolinate + NADP(+) + H2O = (2S,4S)-4-hydroxy-2,3,4,5-tetrahydrodipicolinate + NADPH + H(+). The protein operates within amino-acid biosynthesis; L-lysine biosynthesis via DAP pathway; (S)-tetrahydrodipicolinate from L-aspartate: step 4/4. Catalyzes the conversion of 4-hydroxy-tetrahydrodipicolinate (HTPA) to tetrahydrodipicolinate. This is 4-hydroxy-tetrahydrodipicolinate reductase from Dictyoglomus turgidum (strain DSM 6724 / Z-1310).